A 150-amino-acid polypeptide reads, in one-letter code: UPF0178 protein Rru_A0086 (150 aa).

This sequence belongs to the UPF0178 family.

This chain is UPF0178 protein Rru_A0086, found in Rhodospirillum rubrum (strain ATCC 11170 / ATH 1.1.1 / DSM 467 / LMG 4362 / NCIMB 8255 / S1).